Here is a 210-residue protein sequence, read N- to C-terminus: Orotate phosphoribosyltransferase (210 aa).

5-phospho-alpha-D-ribose 1-diphosphate-binding positions include R96, K100, H102, and 122-130; that span reads EDLISTGGS. S126 provides a ligand contact to orotate.

This sequence belongs to the purine/pyrimidine phosphoribosyltransferase family. PyrE subfamily. In terms of assembly, homodimer. Mg(2+) is required as a cofactor.

The catalysed reaction is orotidine 5'-phosphate + diphosphate = orotate + 5-phospho-alpha-D-ribose 1-diphosphate. Its pathway is pyrimidine metabolism; UMP biosynthesis via de novo pathway; UMP from orotate: step 1/2. Functionally, catalyzes the transfer of a ribosyl phosphate group from 5-phosphoribose 1-diphosphate to orotate, leading to the formation of orotidine monophosphate (OMP). This Streptococcus pneumoniae serotype 19F (strain G54) protein is Orotate phosphoribosyltransferase (pyrE).